The primary structure comprises 196 residues: Dephospho-CoA kinase (196 aa).

Residues 5–196 enclose the DPCK domain; that stretch reads IIGLTGGIAT…QVDIALNFEL (192 aa). Residue 13-18 coordinates ATP; that stretch reads ATGKTT.

Belongs to the CoaE family.

It localises to the cytoplasm. It catalyses the reaction 3'-dephospho-CoA + ATP = ADP + CoA + H(+). Its pathway is cofactor biosynthesis; coenzyme A biosynthesis; CoA from (R)-pantothenate: step 5/5. Its function is as follows. Catalyzes the phosphorylation of the 3'-hydroxyl group of dephosphocoenzyme A to form coenzyme A. In Nostoc sp. (strain PCC 7120 / SAG 25.82 / UTEX 2576), this protein is Dephospho-CoA kinase.